Consider the following 239-residue polypeptide: Lectin (239 aa).

Asn-17 and Asn-113 each carry an N-linked (GlcNAc...) asparagine glycan.

This sequence belongs to the leguminous lectin family. As to quaternary structure, homodimer.

Its function is as follows. Galactose and N-acetyllactosamine specific lectin. In Erythrina crista-galli (Cockspur coral tree), this protein is Lectin.